Consider the following 455-residue polypeptide: Phosphoglucosamine mutase (455 aa).

The active-site Phosphoserine intermediate is the Ser-104. The Mg(2+) site is built by Ser-104, Asp-243, Asp-245, and Asp-247. Ser-104 is subject to Phosphoserine.

Belongs to the phosphohexose mutase family. It depends on Mg(2+) as a cofactor. In terms of processing, activated by phosphorylation.

It catalyses the reaction alpha-D-glucosamine 1-phosphate = D-glucosamine 6-phosphate. Functionally, catalyzes the conversion of glucosamine-6-phosphate to glucosamine-1-phosphate. This chain is Phosphoglucosamine mutase, found in Synechococcus sp. (strain CC9311).